Here is a 218-residue protein sequence, read N- to C-terminus: GTP cyclohydrolase 1 (218 aa).

Zn(2+) contacts are provided by Cys-109, His-112, and Cys-180.

The protein belongs to the GTP cyclohydrolase I family. In terms of assembly, toroid-shaped homodecamer, composed of two pentamers of five dimers.

The catalysed reaction is GTP + H2O = 7,8-dihydroneopterin 3'-triphosphate + formate + H(+). Its pathway is cofactor biosynthesis; 7,8-dihydroneopterin triphosphate biosynthesis; 7,8-dihydroneopterin triphosphate from GTP: step 1/1. In Actinobacillus pleuropneumoniae serotype 5b (strain L20), this protein is GTP cyclohydrolase 1.